The chain runs to 272 residues: Prohibitin 1 (272 aa).

Ala2 carries the post-translational modification N-acetylalanine. At Thr91 the chain carries Phosphothreonine. Residues Lys128 and Lys186 each carry the N6-acetyllysine modification. Residues 177-211 (KEFTEAVEAKQVAQQEAERARFVVEKAEQQKKAAI) are a coiled coil. N6-acetyllysine; alternate is present on Lys202. Lys202 is subject to N6-succinyllysine; alternate. Tyr249 bears the Phosphotyrosine mark.

Belongs to the prohibitin family. In terms of assembly, the mitochondrial prohibitin complex consists of two subunits (PHB1 and PHB2), assembled into a membrane-associated ring-shaped supercomplex of approximately 1 mDa. Interacts with STOML2. Interacts with MAP1LC3B (membrane-bound form LC3-II); the interaction requires PHB2 and takes place upon Parkin-mediated mitochondrial damage. Interacts with STAT3 (unphosphorylated or phosphorylated at 'Ser-727'). Interacts with CLPB. Interacts with CD86 (via cytoplasmic domain); the interactions increases after priming with CD40.

The protein resides in the mitochondrion inner membrane. The protein localises to the nucleus. It is found in the cytoplasm. It localises to the cell membrane. Functionally, protein with pleiotropic attributes mediated in a cell-compartment- and tissue-specific manner, which include the plasma membrane-associated cell signaling functions, mitochondrial chaperone, and transcriptional co-regulator of transcription factors in the nucleus. Plays a role in adipose tissue and glucose homeostasis in a sex-specific manner. Contributes to pulmonary vascular remodeling by accelerating proliferation of pulmonary arterial smooth muscle cells. Its function is as follows. In the mitochondria, together with PHB2, forms large ring complexes (prohibitin complexes) in the inner mitochondrial membrane (IMM) and functions as a chaperone protein that stabilizes mitochondrial respiratory enzymes and maintains mitochondrial integrity in the IMM, which is required for mitochondrial morphogenesis, neuronal survival, and normal lifespan. The prohibitin complex, with DNAJC19, regulates cardiolipin remodeling and the protein turnover of OMA1 in a cardiolipin-binding manner. Regulates mitochondrial respiration activity playing a role in cellular aging. The prohibitin complex plays a role of mitophagy receptor involved in targeting mitochondria for autophagic degradation. Involved in mitochondrial-mediated antiviral innate immunity, activates RIG-I-mediated signal transduction and production of IFNB1 and proinflammatory cytokine IL6. In the nucleus, acts as a transcription coregulator, enhances promoter binding by TP53, a transcription factor it activates, but reduces the promoter binding by E2F1, a transcription factor it represses. Interacts with STAT3 to affect IL17 secretion in T-helper Th17 cells. In terms of biological role, in the plasma membrane, cooperates with CD86 to mediate CD86-signaling in B lymphocytes that regulates the level of IgG1 produced through the activation of distal signaling intermediates. Upon CD40 engagement, required to activate NF-kappa-B signaling pathway via phospholipase C and protein kinase C activation. The sequence is that of Prohibitin 1 (PHB1) from Bos taurus (Bovine).